A 231-amino-acid polypeptide reads, in one-letter code: Small ribosomal subunit protein uS3 (231 aa).

One can recognise a KH type-2 domain in the interval 38–106 (IRVYLKNRLK…KTFVNIMEIK (69 aa)).

This sequence belongs to the universal ribosomal protein uS3 family. Part of the 30S ribosomal subunit. Forms a tight complex with proteins S10 and S14.

Binds the lower part of the 30S subunit head. Binds mRNA in the 70S ribosome, positioning it for translation. This is Small ribosomal subunit protein uS3 from Endomicrobium trichonymphae.